The chain runs to 82 residues: ATP synthase subunit c, chloroplastic (82 aa).

The next 2 helical transmembrane spans lie at 7–27 (GASVIAAGLAIGLASIGPGIG) and 57–77 (LAFMESLTIYGLVVALCLLFA).

Belongs to the ATPase C chain family. As to quaternary structure, F-type ATPases have 2 components, F(1) - the catalytic core - and F(0) - the membrane proton channel. F(1) has five subunits: alpha(3), beta(3), gamma(1), delta(1), epsilon(1). F(0) has four main subunits: a(1), b(1), b'(1) and c(10-14). The alpha and beta chains form an alternating ring which encloses part of the gamma chain. F(1) is attached to F(0) by a central stalk formed by the gamma and epsilon chains, while a peripheral stalk is formed by the delta, b and b' chains.

It is found in the plastid. Its subcellular location is the chloroplast thylakoid membrane. Functionally, f(1)F(0) ATP synthase produces ATP from ADP in the presence of a proton or sodium gradient. F-type ATPases consist of two structural domains, F(1) containing the extramembraneous catalytic core and F(0) containing the membrane proton channel, linked together by a central stalk and a peripheral stalk. During catalysis, ATP synthesis in the catalytic domain of F(1) is coupled via a rotary mechanism of the central stalk subunits to proton translocation. In terms of biological role, key component of the F(0) channel; it plays a direct role in translocation across the membrane. A homomeric c-ring of between 10-14 subunits forms the central stalk rotor element with the F(1) delta and epsilon subunits. The sequence is that of ATP synthase subunit c, chloroplastic from Emiliania huxleyi (Coccolithophore).